A 342-amino-acid chain; its full sequence is Hydrogenase expression/formation protein HupV (342 aa).

This sequence belongs to the HupK family.

This Azotobacter chroococcum mcd 1 protein is Hydrogenase expression/formation protein HupV (hupV).